The following is a 344-amino-acid chain: Anthranilate phosphoribosyltransferase (344 aa).

5-phospho-alpha-D-ribose 1-diphosphate is bound by residues Gly-83, 86 to 87, Thr-91, 93 to 96, 111 to 119, and Ser-123; these read GD, NIST, and KHGGRSVSS. Residue Gly-83 participates in anthranilate binding. Residue Ser-95 coordinates Mg(2+). Arg-169 contacts anthranilate. Residues Asp-228 and Glu-229 each contribute to the Mg(2+) site.

It belongs to the anthranilate phosphoribosyltransferase family. As to quaternary structure, homodimer. Mg(2+) is required as a cofactor.

The enzyme catalyses N-(5-phospho-beta-D-ribosyl)anthranilate + diphosphate = 5-phospho-alpha-D-ribose 1-diphosphate + anthranilate. It functions in the pathway amino-acid biosynthesis; L-tryptophan biosynthesis; L-tryptophan from chorismate: step 2/5. In terms of biological role, catalyzes the transfer of the phosphoribosyl group of 5-phosphorylribose-1-pyrophosphate (PRPP) to anthranilate to yield N-(5'-phosphoribosyl)-anthranilate (PRA). In Methylibium petroleiphilum (strain ATCC BAA-1232 / LMG 22953 / PM1), this protein is Anthranilate phosphoribosyltransferase.